The following is a 168-amino-acid chain: Ribosome maturation factor RimM (168 aa).

The region spanning Lys-95–Tyr-168 is the PRC barrel domain.

It belongs to the RimM family. Binds ribosomal protein uS19.

Its subcellular location is the cytoplasm. Its function is as follows. An accessory protein needed during the final step in the assembly of 30S ribosomal subunit, possibly for assembly of the head region. Essential for efficient processing of 16S rRNA. May be needed both before and after RbfA during the maturation of 16S rRNA. It has affinity for free ribosomal 30S subunits but not for 70S ribosomes. The polypeptide is Ribosome maturation factor RimM (Nitrosomonas eutropha (strain DSM 101675 / C91 / Nm57)).